A 132-amino-acid polypeptide reads, in one-letter code: Small ribosomal subunit protein uS8 (132 aa).

This sequence belongs to the universal ribosomal protein uS8 family. In terms of assembly, part of the 30S ribosomal subunit. Contacts proteins S5 and S12.

Its function is as follows. One of the primary rRNA binding proteins, it binds directly to 16S rRNA central domain where it helps coordinate assembly of the platform of the 30S subunit. This Renibacterium salmoninarum (strain ATCC 33209 / DSM 20767 / JCM 11484 / NBRC 15589 / NCIMB 2235) protein is Small ribosomal subunit protein uS8.